Here is a 328-residue protein sequence, read N- to C-terminus: Methionyl-tRNA formyltransferase (328 aa).

110–113 contacts (6S)-5,6,7,8-tetrahydrofolate; it reads SNLP.

This sequence belongs to the Fmt family.

It carries out the reaction L-methionyl-tRNA(fMet) + (6R)-10-formyltetrahydrofolate = N-formyl-L-methionyl-tRNA(fMet) + (6S)-5,6,7,8-tetrahydrofolate + H(+). In terms of biological role, attaches a formyl group to the free amino group of methionyl-tRNA(fMet). The formyl group appears to play a dual role in the initiator identity of N-formylmethionyl-tRNA by promoting its recognition by IF2 and preventing the misappropriation of this tRNA by the elongation apparatus. This chain is Methionyl-tRNA formyltransferase, found in Bifidobacterium longum (strain DJO10A).